The primary structure comprises 85 residues: uncharacterized protein (85 aa).

Disordered regions lie at residues 1 to 28 (MPQK…LRKA) and 35 to 54 (SKKK…SLTE). Residues 35–48 (SKKKSLQHLKKLKK) are compositionally biased toward basic residues.

The protein resides in the nucleus. This is an uncharacterized protein from Saccharomyces cerevisiae (strain ATCC 204508 / S288c) (Baker's yeast).